Reading from the N-terminus, the 451-residue chain is UPF0210 protein lmo0534 (451 aa).

The protein belongs to the UPF0210 family. In terms of assembly, homodimer.

The sequence is that of UPF0210 protein lmo0534 from Listeria monocytogenes serovar 1/2a (strain ATCC BAA-679 / EGD-e).